A 410-amino-acid chain; its full sequence is Arginine deiminase (410 aa).

The active-site Amidino-cysteine intermediate is the cysteine 400.

This sequence belongs to the arginine deiminase family.

The protein localises to the cytoplasm. It carries out the reaction L-arginine + H2O = L-citrulline + NH4(+). It functions in the pathway amino-acid degradation; L-arginine degradation via ADI pathway; carbamoyl phosphate from L-arginine: step 1/2. The sequence is that of Arginine deiminase from Bacillus cereus (strain G9842).